The following is a 300-amino-acid chain: Cholesterol 25-hydroxylase-like protein (300 aa).

N-linked (GlcNAc...) asparagine glycosylation occurs at asparagine 9. A run of 3 helical transmembrane segments spans residues 43–63, 95–115, and 130–152; these read LFPP…FTFI, LQGW…LIWV, and MVSQ…HYFN. The 132-residue stretch at 135–266 folds into the Fatty acid hydroxylase domain; that stretch reads AIFFLAFDFT…WFNYLDRLMG (132 aa). The Histidine box-1 motif lies at 148 to 152; that stretch reads FHYFN. The Histidine box-2 motif lies at 163 to 167; sequence HSVHH. The helical transmembrane segment at 180–200 threads the bilayer; sequence LHPFELFFVATFITTVPWIFP. The short motif at 242–248 is the Histidine box-3 element; the sequence is AHDMHHL.

It belongs to the sterol desaturase family. It depends on Fe cation as a cofactor.

The protein localises to the membrane. In terms of biological role, probable sterol desaturase. The chain is Cholesterol 25-hydroxylase-like protein from Caenorhabditis briggsae.